A 289-amino-acid polypeptide reads, in one-letter code: Prepilin leader peptidase/N-methyltransferase (289 aa).

A helical transmembrane segment spans residues 13-33; the sequence is AFVLCALVLGLLVGSFLNVVI. Zn(2+)-binding residues include C72, C75, C97, and C100. 5 consecutive transmembrane segments (helical) span residues 128–148, 159–179, 183–203, 228–248, and 256–276; these read FSWQ…MSMI, LVLP…FASL, LWGA…FKLV, VLPL…TVML, and GTPI…LLWG.

Belongs to the peptidase A24 family. Zn(2+) is required as a cofactor.

The protein resides in the cell inner membrane. It catalyses the reaction Typically cleaves a -Gly-|-Phe- bond to release an N-terminal, basic peptide of 5-8 residues from type IV prepilin, and then N-methylates the new N-terminal amino group, the methyl donor being S-adenosyl-L-methionine.. Its function is as follows. Plays an essential role in type IV pili and type II pseudopili formation by proteolytically removing the leader sequence from substrate proteins and subsequently monomethylating the alpha-amino group of the newly exposed N-terminal phenylalanine. In Stutzerimonas stutzeri (Pseudomonas stutzeri), this protein is Prepilin leader peptidase/N-methyltransferase (pilD).